Reading from the N-terminus, the 246-residue chain is Small ribosomal subunit protein uS3 (246 aa).

The region spanning isoleucine 38–arginine 106 is the KH type-2 domain. The interval valine 218–arginine 246 is disordered.

It belongs to the universal ribosomal protein uS3 family. As to quaternary structure, part of the 30S ribosomal subunit. Forms a tight complex with proteins S10 and S14.

Binds the lower part of the 30S subunit head. Binds mRNA in the 70S ribosome, positioning it for translation. This chain is Small ribosomal subunit protein uS3, found in Porphyromonas gingivalis (strain ATCC 33277 / DSM 20709 / CIP 103683 / JCM 12257 / NCTC 11834 / 2561).